The sequence spans 532 residues: Exodeoxyribonuclease 7 large subunit (532 aa).

The interval alanine 497–phenylalanine 532 is disordered. Residues threonine 499 to alanine 512 are compositionally biased toward low complexity.

It belongs to the XseA family. In terms of assembly, heterooligomer composed of large and small subunits.

It localises to the cytoplasm. The enzyme catalyses Exonucleolytic cleavage in either 5'- to 3'- or 3'- to 5'-direction to yield nucleoside 5'-phosphates.. Bidirectionally degrades single-stranded DNA into large acid-insoluble oligonucleotides, which are then degraded further into small acid-soluble oligonucleotides. This Agrobacterium fabrum (strain C58 / ATCC 33970) (Agrobacterium tumefaciens (strain C58)) protein is Exodeoxyribonuclease 7 large subunit.